The primary structure comprises 351 residues: Phospho-N-acetylmuramoyl-pentapeptide-transferase (351 aa).

Transmembrane regions (helical) follow at residues 17–37 (MAYA…YIIL), 62–82 (GIPT…LVFW), 85–105 (ILNV…FLGF), 130–150 (IIFS…HVSV), 158–178 (SFQI…LISA), 190–210 (GLAI…AYLT), 230–250 (LVIF…FNAY), 254–274 (IMMG…AALI), 279–299 (ILFS…IIQV), and 328–348 (QVVI…LSTI).

It belongs to the glycosyltransferase 4 family. MraY subfamily. Mg(2+) is required as a cofactor.

The protein resides in the cell inner membrane. The enzyme catalyses UDP-N-acetyl-alpha-D-muramoyl-L-alanyl-gamma-D-glutamyl-meso-2,6-diaminopimeloyl-D-alanyl-D-alanine + di-trans,octa-cis-undecaprenyl phosphate = di-trans,octa-cis-undecaprenyl diphospho-N-acetyl-alpha-D-muramoyl-L-alanyl-D-glutamyl-meso-2,6-diaminopimeloyl-D-alanyl-D-alanine + UMP. It participates in cell wall biogenesis; peptidoglycan biosynthesis. Functionally, catalyzes the initial step of the lipid cycle reactions in the biosynthesis of the cell wall peptidoglycan: transfers peptidoglycan precursor phospho-MurNAc-pentapeptide from UDP-MurNAc-pentapeptide onto the lipid carrier undecaprenyl phosphate, yielding undecaprenyl-pyrophosphoryl-MurNAc-pentapeptide, known as lipid I. The chain is Phospho-N-acetylmuramoyl-pentapeptide-transferase from Borreliella burgdorferi (strain ATCC 35210 / DSM 4680 / CIP 102532 / B31) (Borrelia burgdorferi).